A 148-amino-acid chain; its full sequence is Flavodoxin (148 aa).

The region spanning 4–145 (ALIVYGSTTG…DIVGWAHDVR (142 aa)) is the Flavodoxin-like domain.

This sequence belongs to the flavodoxin family. The cofactor is FMN.

Its function is as follows. Low-potential electron donor to a number of redox enzymes. The polypeptide is Flavodoxin (Nitratidesulfovibrio vulgaris (strain ATCC 29579 / DSM 644 / CCUG 34227 / NCIMB 8303 / VKM B-1760 / Hildenborough) (Desulfovibrio vulgaris)).